The primary structure comprises 541 residues: Glutamine-dependent NAD(+) synthetase (541 aa).

Residues 4-243 (FKIALAQFSP…EELYYSEFDI (240 aa)) form the CN hydrolase domain. Residue Glu44 is the Proton acceptor; for glutaminase activity of the active site. Lys111 (for glutaminase activity) is an active-site residue. Tyr117 lines the L-glutamine pocket. Residue Cys147 is the Nucleophile; for glutaminase activity of the active site. L-glutamine-binding residues include Ser173 and Lys179. Residue 286-293 (GLSGGIDS) participates in ATP binding. Asn369 provides a ligand contact to deamido-NAD(+). ATP is bound at residue Thr393. Positions 398 and 510 each coordinate deamido-NAD(+).

This sequence in the C-terminal section; belongs to the NAD synthetase family.

It catalyses the reaction deamido-NAD(+) + L-glutamine + ATP + H2O = L-glutamate + AMP + diphosphate + NAD(+) + H(+). The protein operates within cofactor biosynthesis; NAD(+) biosynthesis; NAD(+) from deamido-NAD(+) (L-Gln route): step 1/1. Catalyzes the ATP-dependent amidation of deamido-NAD to form NAD. Uses L-glutamine as a nitrogen source. In vitro, can also use ammonia as donor with comparable specific activity, but cannot use nicotinate mononucleotide (NaMN) as substrate. The chain is Glutamine-dependent NAD(+) synthetase from Acinetobacter baylyi (strain ATCC 33305 / BD413 / ADP1).